The primary structure comprises 941 residues: Endoplasmic reticulum aminopeptidase 1 (941 aa).

Position 1 (Met-1) is a topological domain, cytoplasmic. The helical; Signal-anchor for type II membrane protein transmembrane segment at 2-21 threads the bilayer; it reads VFLPLKWSLATMSFLLSSLL. Over 22 to 941 the chain is Lumenal; the sequence is ALLTVSTPSW…WLQSEKLERM (920 aa). 2 N-linked (GlcNAc...) asparagine glycosylation sites follow: Asn-70 and Asn-154. Substrate is bound by residues Glu-183 and 317–321; that span reads GAMEN. His-353 is a binding site for Zn(2+). Catalysis depends on Glu-354, which acts as the Proton acceptor. Residues His-357 and Glu-376 each coordinate Zn(2+). 2 cysteine pairs are disulfide-bonded: Cys-404/Cys-443 and Cys-736/Cys-743. N-linked (GlcNAc...) asparagine glycosylation is present at Asn-414. Asn-760 and Asn-901 each carry an N-linked (GlcNAc...) asparagine glycan.

The protein belongs to the peptidase M1 family. As to quaternary structure, monomer. May also exist as a heterodimer; with ERAP2. Interacts with RBMX. It depends on Zn(2+) as a cofactor. In terms of processing, N-glycosylated. As to expression, ubiquitous.

It localises to the endoplasmic reticulum membrane. Aminopeptidase that plays a central role in peptide trimming, a step required for the generation of most HLA class I-binding peptides. Peptide trimming is essential to customize longer precursor peptides to fit them to the correct length required for presentation on MHC class I molecules. Strongly prefers substrates 9-16 residues long. Rapidly degrades 13-mer to a 9-mer and then stops. Preferentially hydrolyzes the residue Leu and peptides with a hydrophobic C-terminus, while it has weak activity toward peptides with charged C-terminus. May play a role in the inactivation of peptide hormones. May be involved in the regulation of blood pressure through the inactivation of angiotensin II and/or the generation of bradykinin in the kidney. This Homo sapiens (Human) protein is Endoplasmic reticulum aminopeptidase 1 (ERAP1).